We begin with the raw amino-acid sequence, 283 residues long: MLRYKAIVEYDGTNFVGWQRQQNGLSIQQLLEDKISTFTKQTVNLIAAGRTDAGVHALGQVVHFDLISPNNSKDLACINKETDNKEVSKQNNTTTTIDSLKMLPCRYNAYKLMSAVNYLLKPHRIILTSCEITTLQFHARFSAKARHYKYRIINRAVPSVIEQNRTWWIKTPLNVIDMIDASQHLIGKHDFTSFRSSACQAKSPLKTLTKIEVDTTNYPEIQIYFSAPSFLHHMVRNIVGTLVYIGLCKISPAAIKTILFAKNRAMAGPTAPSSGLYFVKVDY.

Asp-52 serves as the catalytic Nucleophile. A substrate-binding site is contributed by Tyr-148.

Belongs to the tRNA pseudouridine synthase TruA family. In terms of assembly, homodimer.

The enzyme catalyses uridine(38/39/40) in tRNA = pseudouridine(38/39/40) in tRNA. Formation of pseudouridine at positions 38, 39 and 40 in the anticodon stem and loop of transfer RNAs. The protein is tRNA pseudouridine synthase A of Orientia tsutsugamushi (strain Ikeda) (Rickettsia tsutsugamushi).